The chain runs to 166 residues: 2-C-methyl-D-erythritol 2,4-cyclodiphosphate synthase (166 aa).

Asp12 and His14 together coordinate a divalent metal cation. Residues 12–14 and 38–39 contribute to the 4-CDP-2-C-methyl-D-erythritol 2-phosphate site; these read DSH and HS. His46 contacts a divalent metal cation. Residues 60–62, 65–69, and Arg146 each bind 4-CDP-2-C-methyl-D-erythritol 2-phosphate; these read DIG and FPDTD.

The protein belongs to the IspF family. As to quaternary structure, homotrimer. A divalent metal cation is required as a cofactor.

It carries out the reaction 4-CDP-2-C-methyl-D-erythritol 2-phosphate = 2-C-methyl-D-erythritol 2,4-cyclic diphosphate + CMP. It participates in isoprenoid biosynthesis; isopentenyl diphosphate biosynthesis via DXP pathway; isopentenyl diphosphate from 1-deoxy-D-xylulose 5-phosphate: step 4/6. Its function is as follows. Involved in the biosynthesis of isopentenyl diphosphate (IPP) and dimethylallyl diphosphate (DMAPP), two major building blocks of isoprenoid compounds. Catalyzes the conversion of 4-diphosphocytidyl-2-C-methyl-D-erythritol 2-phosphate (CDP-ME2P) to 2-C-methyl-D-erythritol 2,4-cyclodiphosphate (ME-CPP) with a corresponding release of cytidine 5-monophosphate (CMP). The chain is 2-C-methyl-D-erythritol 2,4-cyclodiphosphate synthase from Gemmatimonas aurantiaca (strain DSM 14586 / JCM 11422 / NBRC 100505 / T-27).